Here is an 89-residue protein sequence, read N- to C-terminus: Small ribosomal subunit protein uS15 (89 aa).

It belongs to the universal ribosomal protein uS15 family. As to quaternary structure, part of the 30S ribosomal subunit. Forms a bridge to the 50S subunit in the 70S ribosome, contacting the 23S rRNA.

Its function is as follows. One of the primary rRNA binding proteins, it binds directly to 16S rRNA where it helps nucleate assembly of the platform of the 30S subunit by binding and bridging several RNA helices of the 16S rRNA. Forms an intersubunit bridge (bridge B4) with the 23S rRNA of the 50S subunit in the ribosome. In Chlorobium phaeovibrioides (strain DSM 265 / 1930) (Prosthecochloris vibrioformis (strain DSM 265)), this protein is Small ribosomal subunit protein uS15.